The sequence spans 109 residues: Putative membrane protein insertion efficiency factor (109 aa).

This sequence belongs to the UPF0161 family.

The protein localises to the cell inner membrane. Could be involved in insertion of integral membrane proteins into the membrane. This Rhodopseudomonas palustris (strain BisB18) protein is Putative membrane protein insertion efficiency factor.